A 93-amino-acid chain; its full sequence is Acylphosphatase (93 aa).

The 88-residue stretch at Arg-6–Arg-93 folds into the Acylphosphatase-like domain. Catalysis depends on residues Arg-21 and Asn-40.

Belongs to the acylphosphatase family.

The enzyme catalyses an acyl phosphate + H2O = a carboxylate + phosphate + H(+). The protein is Acylphosphatase (acyP) of Streptomyces coelicolor (strain ATCC BAA-471 / A3(2) / M145).